Here is a 130-residue protein sequence, read N- to C-terminus: Small ribosomal subunit protein uS9 (130 aa).

The protein belongs to the universal ribosomal protein uS9 family.

This Ralstonia nicotianae (strain ATCC BAA-1114 / GMI1000) (Ralstonia solanacearum) protein is Small ribosomal subunit protein uS9.